Reading from the N-terminus, the 105-residue chain is UPF0045 protein ECM15 (105 aa).

It belongs to the UPF0045 family.

This Eremothecium gossypii (strain ATCC 10895 / CBS 109.51 / FGSC 9923 / NRRL Y-1056) (Yeast) protein is UPF0045 protein ECM15 (ECM15).